The primary structure comprises 170 residues: Crossover junction endodeoxyribonuclease RuvC (170 aa).

Catalysis depends on residues aspartate 11, glutamate 71, and aspartate 143. Mg(2+)-binding residues include aspartate 11, glutamate 71, and aspartate 143.

This sequence belongs to the RuvC family. Homodimer which binds Holliday junction (HJ) DNA. The HJ becomes 2-fold symmetrical on binding to RuvC with unstacked arms; it has a different conformation from HJ DNA in complex with RuvA. In the full resolvosome a probable DNA-RuvA(4)-RuvB(12)-RuvC(2) complex forms which resolves the HJ. Mg(2+) serves as cofactor.

The protein localises to the cytoplasm. The enzyme catalyses Endonucleolytic cleavage at a junction such as a reciprocal single-stranded crossover between two homologous DNA duplexes (Holliday junction).. In terms of biological role, the RuvA-RuvB-RuvC complex processes Holliday junction (HJ) DNA during genetic recombination and DNA repair. Endonuclease that resolves HJ intermediates. Cleaves cruciform DNA by making single-stranded nicks across the HJ at symmetrical positions within the homologous arms, yielding a 5'-phosphate and a 3'-hydroxyl group; requires a central core of homology in the junction. The consensus cleavage sequence is 5'-(A/T)TT(C/G)-3'. Cleavage occurs on the 3'-side of the TT dinucleotide at the point of strand exchange. HJ branch migration catalyzed by RuvA-RuvB allows RuvC to scan DNA until it finds its consensus sequence, where it cleaves and resolves the cruciform DNA. The protein is Crossover junction endodeoxyribonuclease RuvC of Rhizobium meliloti (strain 1021) (Ensifer meliloti).